We begin with the raw amino-acid sequence, 48 residues long: Protein TUNAR (48 aa).

The tract at residues 1-20 (MVITSGNDEDRGGQEKESKE) is disordered. Residues 8–20 (DEDRGGQEKESKE) show a composition bias toward basic and acidic residues. A helical transmembrane segment spans residues 24–44 (LAMLGIIGTILNLIVIIFVYI).

In terms of assembly, interacts with ATPase ATP2A2/SERCA2. Interacts with ATPase ATP2A3/SERCA3; the interaction occurs at low levels in low glucose conditions and is increased by high glucose levels. As to expression, in the adult, expressed in Purkinje cells in the cerebellum, in motor neurons and interneurons in the spinal cord and in neurons of the cortex, hippocampus and thalamus (at protein level). Also detected in the developing cortex, hippocampus and thalamus at embryonic day E15.5 (at protein level).

It localises to the endoplasmic reticulum membrane. It is found in the extracellular vesicle membrane. In terms of biological role, in neurons, plays a role in the regulation of intracellular Ca(2+), possibly by acting as an activator of ATP2A2/SERCA2, thus increasing the efficiency with which Ca(2+) is removed from the cytoplasm. Inhibits differentiation of embryonic stem cells into neurons and inhibits neurite outgrowth, likely as a result of its role in intracellular Ca(2+) regulation. In pancreatic beta cells, lowers Ca(2+) levels in the endoplasmic reticulum and enhances glucose-stimulated insulin secretion. The sequence is that of Protein TUNAR from Mus musculus (Mouse).